The primary structure comprises 424 residues: Histidine--tRNA ligase (424 aa).

Belongs to the class-II aminoacyl-tRNA synthetase family. Homodimer.

Its subcellular location is the cytoplasm. The enzyme catalyses tRNA(His) + L-histidine + ATP = L-histidyl-tRNA(His) + AMP + diphosphate + H(+). This Salmonella heidelberg (strain SL476) protein is Histidine--tRNA ligase.